We begin with the raw amino-acid sequence, 86 residues long: Toxin Aam3 (86 aa).

A signal peptide spans Met-1–Ser-19. Residues Arg-21 to Thr-85 form the LCN-type CS-alpha/beta domain. 4 disulfide bridges follow: Cys-31/Cys-84, Cys-35/Cys-56, Cys-42/Cys-66, and Cys-46/Cys-68.

This sequence belongs to the long (4 C-C) scorpion toxin superfamily. Sodium channel inhibitor family. Alpha subfamily. In terms of processing, the C-terminal basic residue is removed by a carboxypeptidase. Expressed by the venom gland.

The protein localises to the secreted. In terms of biological role, alpha toxins bind voltage-independently at site-3 of sodium channels (Nav) and inhibit the inactivation of the activated channels, thereby blocking neuronal transmission. This is Toxin Aam3 from Androctonus amoreuxi (African fattail scorpion).